The primary structure comprises 61 residues: Short neurotoxin 2 (61 aa).

4 disulfides stabilise this stretch: C3–C23, C17–C40, C42–C53, and C54–C59.

It belongs to the three-finger toxin family. Short-chain subfamily. Type I alpha-neurotoxin sub-subfamily. As to expression, expressed by the venom gland.

The protein localises to the secreted. Functionally, binds to muscle nicotinic acetylcholine receptor (nAChR) and inhibit acetylcholine from binding to the receptor, thereby impairing neuromuscular transmission. The protein is Short neurotoxin 2 of Hemachatus haemachatus (Rinkhals).